Consider the following 262-residue polypeptide: Shikimate dehydrogenase (NADP(+)) (262 aa).

Residues 15 to 17 (SRS) and Thr-62 contribute to the shikimate site. Lys-66 functions as the Proton acceptor in the catalytic mechanism. An NADP(+)-binding site is contributed by Glu-78. Residues Asn-87 and Asp-102 each contribute to the shikimate site. Residues 126–130 (GAGGA), 150–155 (NRTQQR), and Met-214 contribute to the NADP(+) site. Shikimate is bound at residue Tyr-216. Gly-236 contacts NADP(+).

The protein belongs to the shikimate dehydrogenase family. As to quaternary structure, homodimer.

It carries out the reaction shikimate + NADP(+) = 3-dehydroshikimate + NADPH + H(+). Its pathway is metabolic intermediate biosynthesis; chorismate biosynthesis; chorismate from D-erythrose 4-phosphate and phosphoenolpyruvate: step 4/7. Involved in the biosynthesis of the chorismate, which leads to the biosynthesis of aromatic amino acids. Catalyzes the reversible NADPH linked reduction of 3-dehydroshikimate (DHSA) to yield shikimate (SA). The chain is Shikimate dehydrogenase (NADP(+)) from Acinetobacter baylyi (strain ATCC 33305 / BD413 / ADP1).